Reading from the N-terminus, the 604-residue chain is Solute carrier family 23 member 1 (604 aa).

Positions 1–29 are disordered; it reads MKAQEDPGSSKQHECPDSAGTSTRDQQAP. Residues 1-59 lie on the Cytoplasmic side of the membrane; the sequence is MKAQEDPGSSKQHECPDSAGTSTRDQQAPLPAEPKFDMLYKIEDVPPWYLCILLGFQHY. The helical transmembrane segment at 60–80 threads the bilayer; sequence LTCFSGTIAVPFLLAEALCVG. At 81-88 the chain is on the extracellular side; sequence RDQHMISQ. The helical transmembrane segment at 89–109 threads the bilayer; sequence LIGTIFTCVGITTLIQTTVGI. Arg-110 is a topological domain (cytoplasmic). The helical transmembrane segment at 111–131 threads the bilayer; that stretch reads LPLFQASAFAFLVPAKAILAL. The Extracellular portion of the chain corresponds to 132-166; it reads ERWKCPPEEEIYGNWSMPLNTSHIWHPRIREVQGA. Residues Asn-145 and Asn-151 are each glycosylated (N-linked (GlcNAc...) asparagine). Residues 167–187 traverse the membrane as a helical segment; it reads IMVSSVVEVVIGLLGLPGALL. Residues 188 to 214 are Cytoplasmic-facing; that stretch reads SYIGPLTVTPTVSLIGLSVFQAAGDRA. The helical transmembrane segment at 215–232 threads the bilayer; it reads GSHWGISACSILLIVLFS. Topologically, residues 233–236 are extracellular; it reads QYLR. An intramembrane region (helical) is located at residues 237–250; it reads NLTFLLPVYRWGKG. At 251–257 the chain is on the extracellular side; sequence LTLFRIQ. A helical membrane pass occupies residues 258-278; it reads IFKMFPIVLAIMTVWLLCYVL. Topologically, residues 279–319 are cytoplasmic; the sequence is TLTDVLPADPTVYGFQARTDARGDIMAISPWIRIPYPCQWG. Residues 320–340 form a helical membrane-spanning segment; the sequence is LPTVTVAAVLGMFSATLAGII. Residues 341–365 are Extracellular-facing; sequence ESIGDYYACARLAGAPPPPVHAINR. Residues 366 to 386 form a helical membrane-spanning segment; the sequence is GIFTEGVCCIIAGLLGTGNGS. At 387 to 409 the chain is on the cytoplasmic side; the sequence is TSSSPNIGVLGITKVGSRRVVQY. A helical membrane pass occupies residues 410 to 430; sequence GAGIMLILGAIGKFTALFASL. At 431–433 the chain is on the extracellular side; it reads PDP. A helical membrane pass occupies residues 434-454; sequence ILGGMFCTLFGMITAVGLSNL. Residues 455–464 are Cytoplasmic-facing; that stretch reads QFVDMNSSRN. Residues 465-485 traverse the membrane as a helical segment; it reads LFVLGFSMFFGLTLPNYLDSN. The Extracellular segment spans residues 486–497; sequence PGAINTGVPEVD. Residues 498–518 form a helical membrane-spanning segment; it reads QILTVLLTTEMFVGGCLAFIL. Topologically, residues 519 to 604 are cytoplasmic; that stretch reads DNTVPGSPEE…TETGSVCTKV (86 aa). The residue at position 597 (Thr-597) is a Phosphothreonine. A Phosphoserine modification is found at Ser-599. At Thr-602 the chain carries Phosphothreonine.

It belongs to the nucleobase:cation symporter-2 (NCS2) (TC 2.A.40) family. Phosphorylated. As to expression, highly expressed in the straight segment of proximal tubules in the kidney, in intestine and liver. Detected in epithelial cells of the bronchiole and epididymis.

Its subcellular location is the cell membrane. The catalysed reaction is L-ascorbate(out) + 2 Na(+)(out) = L-ascorbate(in) + 2 Na(+)(in). It catalyses the reaction urate(out) + 2 Na(+)(out) = urate(in) + 2 Na(+)(in). Its function is as follows. Sodium/ascorbate cotransporter. Mediates electrogenic uptake of vitamin C, with a stoichiometry of 2 Na(+) for each ascorbate. Has retained some ancestral activity toward nucleobases such as urate, an oxidized purine. Low-affinity high-capacity sodium:urate cotransporter, may regulate serum urate levels by serving as a renal urate re-absorber. The chain is Solute carrier family 23 member 1 (Slc23a1) from Rattus norvegicus (Rat).